Reading from the N-terminus, the 407-residue chain is Imidazolonepropionase (407 aa).

The Fe(3+) site is built by H68 and H70. Residues H68 and H70 each coordinate Zn(2+). 4-imidazolone-5-propanoate contacts are provided by R77, Y140, and H173. Y140 is an N-formimidoyl-L-glutamate binding site. Position 238 (H238) interacts with Fe(3+). Residue H238 participates in Zn(2+) binding. Q241 contributes to the 4-imidazolone-5-propanoate binding site. A Fe(3+)-binding site is contributed by D313. D313 is a binding site for Zn(2+). 2 residues coordinate N-formimidoyl-L-glutamate: N315 and G317. T318 contacts 4-imidazolone-5-propanoate.

Belongs to the metallo-dependent hydrolases superfamily. HutI family. Requires Zn(2+) as cofactor. The cofactor is Fe(3+).

Its subcellular location is the cytoplasm. The enzyme catalyses 4-imidazolone-5-propanoate + H2O = N-formimidoyl-L-glutamate. Its pathway is amino-acid degradation; L-histidine degradation into L-glutamate; N-formimidoyl-L-glutamate from L-histidine: step 3/3. Catalyzes the hydrolytic cleavage of the carbon-nitrogen bond in imidazolone-5-propanoate to yield N-formimidoyl-L-glutamate. It is the third step in the universal histidine degradation pathway. The chain is Imidazolonepropionase from Burkholderia ambifaria (strain MC40-6).